Consider the following 340-residue polypeptide: DNA-directed RNA polymerase subunit alpha (340 aa).

The interval 1-236 (MLSLSKNWNT…EQLQLFIAFE (236 aa)) is alpha N-terminal domain (alpha-NTD). The tract at residues 251–340 (FSPYLLKRVD…LSKRYEDSYN (90 aa)) is alpha C-terminal domain (alpha-CTD).

Belongs to the RNA polymerase alpha chain family. In terms of assembly, homodimer. The RNAP catalytic core consists of 2 alpha, 1 beta, 1 beta' and 1 omega subunit. When a sigma factor is associated with the core the holoenzyme is formed, which can initiate transcription.

The enzyme catalyses RNA(n) + a ribonucleoside 5'-triphosphate = RNA(n+1) + diphosphate. In terms of biological role, DNA-dependent RNA polymerase catalyzes the transcription of DNA into RNA using the four ribonucleoside triphosphates as substrates. The sequence is that of DNA-directed RNA polymerase subunit alpha from Rickettsia prowazekii (strain Madrid E).